The chain runs to 552 residues: Chaperonin GroEL (552 aa).

ATP-binding positions include 29-32, Lys-50, 86-90, Gly-420, and Asp-501; these read TAGP and DGTTT.

The protein belongs to the chaperonin (HSP60) family. In terms of assembly, forms a cylinder of 14 subunits composed of two heptameric rings stacked back-to-back. Interacts with the co-chaperonin GroES.

It localises to the cytoplasm. The catalysed reaction is ATP + H2O + a folded polypeptide = ADP + phosphate + an unfolded polypeptide.. In terms of biological role, together with its co-chaperonin GroES, plays an essential role in assisting protein folding. The GroEL-GroES system forms a nano-cage that allows encapsulation of the non-native substrate proteins and provides a physical environment optimized to promote and accelerate protein folding. The chain is Chaperonin GroEL from Wolbachia pipientis subsp. Culex pipiens (strain wPip).